The following is a 359-amino-acid chain: Sulfate/thiosulfate import ATP-binding protein CysA (359 aa).

In terms of domain architecture, ABC transporter spans 3–237 (VRVAGVRKEF…PNSPFVYGFI (235 aa)). Position 35–42 (35–42 (GPSGSGKT)) interacts with ATP.

This sequence belongs to the ABC transporter superfamily. Sulfate/tungstate importer (TC 3.A.1.6) family. As to quaternary structure, the complex is composed of two ATP-binding proteins (CysA), two transmembrane proteins (CysT and CysW) and a solute-binding protein (CysP).

The protein resides in the cell inner membrane. The enzyme catalyses sulfate(out) + ATP + H2O = sulfate(in) + ADP + phosphate + H(+). It carries out the reaction thiosulfate(out) + ATP + H2O = thiosulfate(in) + ADP + phosphate + H(+). Functionally, part of the ABC transporter complex CysAWTP involved in sulfate/thiosulfate import. Responsible for energy coupling to the transport system. This chain is Sulfate/thiosulfate import ATP-binding protein CysA, found in Brucella melitensis biotype 1 (strain ATCC 23456 / CCUG 17765 / NCTC 10094 / 16M).